The chain runs to 64 residues: Large ribosomal subunit protein eL37 (64 aa).

Zn(2+)-binding residues include Cys20, Cys23, Cys35, and Cys38. The segment at 20-38 (CRRCGRRAYHVRKKACAAC) adopts a C4-type zinc-finger fold.

Belongs to the eukaryotic ribosomal protein eL37 family. The cofactor is Zn(2+).

In terms of biological role, binds to the 23S rRNA. The sequence is that of Large ribosomal subunit protein eL37 from Methanococcus vannielii (strain ATCC 35089 / DSM 1224 / JCM 13029 / OCM 148 / SB).